The following is a 142-amino-acid chain: MAIIIGSDAAGKRLKDVIKTFLKDNNHEVLDVTERKDLDFVDSTLAVVHEVQKNDKNLGIAIDAYGAGSFMVATKVKGMIAAEVSDERSAYMTRGHNNARIITLGAEIVGDELAKNIVKDFVEAKYDGGRHQIRVDMLNKMC.

The protein belongs to the LacAB/RpiB family. In terms of assembly, heteromultimeric protein consisting of LacA and LacB.

The enzyme catalyses aldehydo-D-galactose 6-phosphate = keto-D-tagatose 6-phosphate. Its pathway is carbohydrate metabolism; D-galactose 6-phosphate degradation; D-tagatose 6-phosphate from D-galactose 6-phosphate: step 1/1. The chain is Galactose-6-phosphate isomerase subunit LacA from Streptococcus mutans serotype c (strain ATCC 700610 / UA159).